Reading from the N-terminus, the 246-residue chain is Putative KilA-N domain-containing protein L33 (246 aa).

The 110-residue stretch at 20–129 folds into the KilA-N domain; the sequence is RYTKCQYCDI…AKVSLWIEEW (110 aa).

The polypeptide is Putative KilA-N domain-containing protein L33 (Acanthamoeba polyphaga mimivirus (APMV)).